Consider the following 295-residue polypeptide: Nucleotide-binding protein llmg_1557 (295 aa).

ATP is bound at residue 12–19; sequence GMSGAGKT. Residue 63 to 66 coordinates GTP; sequence DMRS.

It belongs to the RapZ-like family.

Its function is as follows. Displays ATPase and GTPase activities. The protein is Nucleotide-binding protein llmg_1557 of Lactococcus lactis subsp. cremoris (strain MG1363).